The chain runs to 249 residues: MSEQKITFADQKRKTVETAEFTEDGRYKRKVRSFVLRTGRLSEFQRNMMNDNWADFGLEHQNNYFDFAEIYGNTNPVILEIGFGMGKSLVEMAEQNPERNYLGIEVHTPGVGACIAYAVEKQVKNLRVICHDATEILQDCIADDSLGGLQLFFPDPWHKSKHHKRRIVQPNFVDNVMQKLQQSGFIHMATDWENYAEQMLDVLSQSKALTNTSKTNDFIPRPDFRPLTKFEQRGHRLGHGVWDLYFVKN.

Residues Glu80, Glu105, Asp132, and Asp155 each contribute to the S-adenosyl-L-methionine site. Asp155 is an active-site residue. Residues Lys159, Asp191, and 228–231 (TKFE) each bind substrate.

Belongs to the class I-like SAM-binding methyltransferase superfamily. TrmB family.

The enzyme catalyses guanosine(46) in tRNA + S-adenosyl-L-methionine = N(7)-methylguanosine(46) in tRNA + S-adenosyl-L-homocysteine. It participates in tRNA modification; N(7)-methylguanine-tRNA biosynthesis. Functionally, catalyzes the formation of N(7)-methylguanine at position 46 (m7G46) in tRNA. The chain is tRNA (guanine-N(7)-)-methyltransferase from Mannheimia succiniciproducens (strain KCTC 0769BP / MBEL55E).